The following is a 125-amino-acid chain: Small ribosomal subunit protein uS12m (125 aa).

Positions 1-27 are disordered; that stretch reads MPTKNQLIRHGREEKRRTDRTRALDQC. Residues 10 to 23 show a composition bias toward basic and acidic residues; the sequence is HGREEKRRTDRTRA.

The protein belongs to the universal ribosomal protein uS12 family.

The protein resides in the mitochondrion. Its function is as follows. Protein S12 is involved in the translation initiation step. This Triticum aestivum (Wheat) protein is Small ribosomal subunit protein uS12m (RPS12).